The primary structure comprises 92 residues: Large ribosomal subunit protein bL27 (92 aa).

Residues 1 to 21 (MSKKKGVGSSRNGRDSESKRL) are disordered. Over residues 12-21 (NGRDSESKRL) the composition is skewed to basic and acidic residues.

This sequence belongs to the bacterial ribosomal protein bL27 family.

The protein is Large ribosomal subunit protein bL27 of Halothermothrix orenii (strain H 168 / OCM 544 / DSM 9562).